The following is a 67-amino-acid chain: MAKIKMKTHRGAAKRFKVLKSGKVKRMKAYKSHLLTHKSSKRKRRLRKATYLEGASAKTIKRLLPYS.

It belongs to the bacterial ribosomal protein bL35 family.

The chain is Large ribosomal subunit protein bL35 from Caldanaerobacter subterraneus subsp. tengcongensis (strain DSM 15242 / JCM 11007 / NBRC 100824 / MB4) (Thermoanaerobacter tengcongensis).